The chain runs to 162 residues: MHLTDLIEKTLTAMGYELVEVERAPAGLLRVYIDQAETGIVIEDCEKVSHQLTRVFEVENVNYERLEVSSPGLDRPLRTLVDFARFAGLEAKVTLRLPVNGQKNFTGIVQAPAGEPGQERIGLEFEGKDGPALLEFTLSELDRARLVPVLDFKGNRNKGNKQ.

This sequence belongs to the RimP family.

The protein localises to the cytoplasm. In terms of biological role, required for maturation of 30S ribosomal subunits. This is Ribosome maturation factor RimP from Ralstonia nicotianae (strain ATCC BAA-1114 / GMI1000) (Ralstonia solanacearum).